A 175-amino-acid chain; its full sequence is Glucagon family neuropeptides (175 aa).

The signal sequence occupies residues 1 to 23 (MSGNVYKTLLTLLVYGLIMHCNV). Positions 24 to 80 (YCSPDRWTPVPGAKLEEEVYDEDGNTLQDFALRAGAPGGGGPRPRWGRCTALYYPPG) are excised as a propeptide. The important for receptor binding stretch occupies residues 149–157 (VKKYLAAVL). Leucine 157 carries the leucine amide modification. Residue lysine 168 is modified to Lysine amide. The propeptide occupies 172–175 (VAYL).

It belongs to the glucagon family.

Its subcellular location is the secreted. Functionally, primary role of GRF is to release GH from the pituitary. Its function is as follows. PACAP is a neuropeptide involved in diverse array of physiological processes through activating the PACAP subfamily of class B1 G protein-coupled receptors: VIP receptor 1 (VIPR1), VIP receptor 2 (VIPR2), and PACAP type I receptor (ADCYAP1R1). Exerts neuroprotective and general cytoprotective effects due to anti-apoptotic, anti-inflammatory, and antioxidant actions. Promotes neuron projection development through the RAPGEF2/Rap1/B-Raf/ERK pathway. In chromaffin cells, induces long-lasting increase of intracellular calcium concentrations and neuroendocrine secretion. Involved in the control of glucose homeostasis, induces insulin secretion by pancreatic beta cells. PACAP exists in two bioactive forms from proteolysis of the same precursor protein, PACAP27 and PACAP38, which differ by eleven amino acid residues in the C-terminus. The protein is Glucagon family neuropeptides (ADCYAP1) of Gallus gallus (Chicken).